The following is a 562-amino-acid chain: Glucocorticoid modulatory element-binding protein 1 (562 aa).

The residue at position 2 (Ala-2) is an N-acetylalanine. One can recognise an SAND domain in the interval Ala-72 to Asp-156. Cys-103 lines the Zn(2+) pocket. Residues Lys-129, Lys-133, Lys-136, and Arg-147 each contribute to the DNA site. Zn(2+)-binding residues include His-160, Cys-164, and Cys-168. Positions Leu-311–Val-357 form a coiled coil. The interval Pro-360 to Ser-384 is disordered. A compositionally biased stretch (polar residues) spans Pro-375–Ser-384.

In terms of assembly, homodimer, and heterodimer of GMEB1 and GMEB2. Interacts with the glucocorticoid receptor (NR3C1) and NCOA2/TIF2. May interact with HSP27 and CREB-binding protein (CBP). Interacts with TRIM63.

The protein localises to the nucleus. It is found in the cytoplasm. In terms of biological role, trans-acting factor that binds to glucocorticoid modulatory elements (GME) present in the TAT (tyrosine aminotransferase) promoter and increases sensitivity to low concentrations of glucocorticoids. Also binds to the transferrin receptor promoter. This Rattus norvegicus (Rat) protein is Glucocorticoid modulatory element-binding protein 1 (Gmeb1).